The following is a 199-amino-acid chain: Protein-L-isoaspartate O-methyltransferase (199 aa).

Residue Ser-51 is part of the active site.

It belongs to the methyltransferase superfamily. L-isoaspartyl/D-aspartyl protein methyltransferase family.

Its subcellular location is the cytoplasm. The enzyme catalyses [protein]-L-isoaspartate + S-adenosyl-L-methionine = [protein]-L-isoaspartate alpha-methyl ester + S-adenosyl-L-homocysteine. Its function is as follows. Catalyzes the methyl esterification of L-isoaspartyl residues in peptides and proteins that result from spontaneous decomposition of normal L-aspartyl and L-asparaginyl residues. It plays a role in the repair and/or degradation of damaged proteins. This Fervidobacterium nodosum (strain ATCC 35602 / DSM 5306 / Rt17-B1) protein is Protein-L-isoaspartate O-methyltransferase.